The chain runs to 144 residues: Gonadotropin subunit beta-2 (144 aa).

The N-terminal stretch at 1-27 is a signal peptide; it reads MGTPVKILVVRNHILFSVVVLLAVAQS. 6 cysteine pairs are disulfide-bonded: C33-C81, C47-C96, C50-C134, C58-C112, C62-C114, and C117-C124. N-linked (GlcNAc...) asparagine glycosylation is present at N37. Positions 143 to 144 are excised as a propeptide; that stretch reads VY.

Belongs to the glycoprotein hormones subunit beta family. In terms of assembly, heterodimer of an alpha and a beta chain.

It localises to the secreted. Its function is as follows. Involved in gametogenesis and steroidogenesis. In Cyprinus carpio (Common carp), this protein is Gonadotropin subunit beta-2 (cgbb).